The primary structure comprises 102 residues: Small ribosomal subunit protein uS10 (102 aa).

This sequence belongs to the universal ribosomal protein uS10 family. Part of the 30S ribosomal subunit.

Functionally, involved in the binding of tRNA to the ribosomes. This Kineococcus radiotolerans (strain ATCC BAA-149 / DSM 14245 / SRS30216) protein is Small ribosomal subunit protein uS10.